The primary structure comprises 207 residues: Large ribosomal subunit protein uL4 (207 aa).

A disordered region spans residues 45 to 78 (RQGTHKTKNRAEVSGGGRKPWRQKGTGRARQGSI).

The protein belongs to the universal ribosomal protein uL4 family. In terms of assembly, part of the 50S ribosomal subunit.

Its function is as follows. One of the primary rRNA binding proteins, this protein initially binds near the 5'-end of the 23S rRNA. It is important during the early stages of 50S assembly. It makes multiple contacts with different domains of the 23S rRNA in the assembled 50S subunit and ribosome. In terms of biological role, forms part of the polypeptide exit tunnel. In Geobacillus sp. (strain WCH70), this protein is Large ribosomal subunit protein uL4.